Here is a 111-residue protein sequence, read N- to C-terminus: WAP four-disulfide core domain protein 12 (111 aa).

An N-terminal signal peptide occupies residues 1–23 (MGSSSFLVLMVSLALVTLVAAEG). A WAP domain is found at 27–74 (NIEKPGVCPADNIRCIKSDPPQCHTDQDCQGIRKCCYLHCGFKCVIPV). Cystine bridges form between C34/C62, C41/C66, C49/C61, and C55/C70. Residues 80–111 (GGNKDEDVSRPCPEPGWEAKPPGVFSTRCPQK) form a disordered region.

Its subcellular location is the secreted. Functionally, antibacterial protein. Putative acid-stable proteinase inhibitor. The chain is WAP four-disulfide core domain protein 12 (WFDC12) from Callithrix jacchus (White-tufted-ear marmoset).